A 237-amino-acid polypeptide reads, in one-letter code: Tetraspanin-8 (237 aa).

Residues 1–9 (MAGVSACIK) lie on the Cytoplasmic side of the membrane. A helical membrane pass occupies residues 10–33 (YSMFTFNFLFWLCGILILALAIWV). Residues 34-57 (RVSNDSQAIFGSEDVGSSSYVAVD) lie on the Extracellular side of the membrane. A helical transmembrane segment spans residues 58-72 (ILIAVGAIIMILGFL). At 73 to 83 (GCCGAIKESRC) the chain is on the cytoplasmic side. The chain crosses the membrane as a helical span at residues 84 to 109 (MLLLFFIGLLLILLLQVATGILGAVF). Over 110-205 (KSKSDRIVNE…SFIKDFLAKN (96 aa)) the chain is Extracellular. A glycan (N-linked (GlcNAc...) asparagine) is linked at asparagine 118. Residues 206-230 (LIIVIGISFGLAVIEILGLVFSMVL) traverse the membrane as a helical segment. Residues 231 to 237 (YCQIGNK) are Cytoplasmic-facing.

The protein belongs to the tetraspanin (TM4SF) family. As to quaternary structure, forms homooligomers. Interacts with MEP1B. Interacts with integrin alpha3/ITGA3. Interacts with RICTOR and MTOR. Interacts with ADAM17. Interacts with ECE1. As to expression, gastric, colon, rectal, and pancreatic carcinomas.

Its subcellular location is the cell membrane. Structural component of specialized membrane microdomains known as tetraspanin-enriched microdomains (TERMs), which act as platforms for receptor clustering and signaling. Participates thereby in diverse biological functions such as cell signal transduction, migration and protein trafficking. Promotes ADAM17-mediated TNF-alpha processing through recruitment of ADAM17 to tetraspanin-enriched micro-domains (TEMs). Forms a complex with RICTOR and integrin alpha3/ITGA3 to mediate mTORC2 activation and AKT1 phosphorylation leading to cell migration. Reduces apoptosis and autophagy induced by high glucose levels through forming a complex with mTOR and RICTOR. Contributes to the maintenance of intestinal epithelial barrier and plays a role in the regulation of intestine inflammation by switching interferon gamma receptor 1/IFNGR1 from clathrin-dependent to lipid raft-dependent endocytosis route to limit STAT1 activation magnitude and duration. Acts as a modulator of the endothelin axis by associating with endothelin converting enzyme ECE1 and regulating its activity of conversion of the endothelin-1 precursor to endothelin. The chain is Tetraspanin-8 (TSPAN8) from Homo sapiens (Human).